The sequence spans 255 residues: Large ribosomal subunit protein uL4 (255 aa).

The protein belongs to the universal ribosomal protein uL4 family. In terms of assembly, part of the 50S ribosomal subunit.

Its function is as follows. One of the primary rRNA binding proteins, this protein initially binds near the 5'-end of the 23S rRNA. It is important during the early stages of 50S assembly. It makes multiple contacts with different domains of the 23S rRNA in the assembled 50S subunit and ribosome. In terms of biological role, forms part of the polypeptide exit tunnel. This Thermococcus kodakarensis (strain ATCC BAA-918 / JCM 12380 / KOD1) (Pyrococcus kodakaraensis (strain KOD1)) protein is Large ribosomal subunit protein uL4.